Reading from the N-terminus, the 74-residue chain is U12-theraphotoxin-Hs1a (74 aa).

Residues 1-20 (MNVKILLLLVGLNLVMHSNA) form the signal peptide. A propeptide spanning residues 21–40 (TGDSETNPAETLFIEEIFRR) is cleaved from the precursor. Intrachain disulfides connect Cys42–Cys56, Cys49–Cys61, and Cys55–Cys71.

It belongs to the neurotoxin 35 family. In terms of tissue distribution, expressed by the venom gland.

The protein localises to the secreted. Functionally, putative ion channel inhibitor. The polypeptide is U12-theraphotoxin-Hs1a (Cyriopagopus schmidti (Chinese bird spider)).